Reading from the N-terminus, the 335-residue chain is Probable peptide ABC transporter ATP-binding protein y4tR (335 aa).

Positions 15-264 (VRDLETHFYG…PTHPYTRALM (250 aa)) constitute an ABC transporter domain. 49 to 56 (GESGCGKS) provides a ligand contact to ATP.

It belongs to the ABC transporter superfamily.

The protein localises to the cell inner membrane. Functionally, probably part of a binding-protein-dependent transport system y4tOPQRS for a peptide. Probably responsible for energy coupling to the transport system. This Sinorhizobium fredii (strain NBRC 101917 / NGR234) protein is Probable peptide ABC transporter ATP-binding protein y4tR.